Here is a 366-residue protein sequence, read N- to C-terminus: ERCC4 domain-containing protein EP364R (366 aa).

Residues phenylalanine 3–alanine 101 form the ERCC4 domain.

The protein belongs to the asfivirus EP364R family.

Its function is as follows. Plays a role in the inhibition of type I interferon signaling pathway. Mechanistically, specifically interacts with 2',3'-cGAMP and cleaves it via its phosphodiesterase activity. In turn, prevents 2',3'-cGAMP interaction with host ER-resident STING1 leading to inhibition of downstream signaling pathway and type I interferon production. This African swine fever virus (isolate Pig/Kenya/KEN-50/1950) (ASFV) protein is ERCC4 domain-containing protein EP364R.